The following is a 351-amino-acid chain: MLEKESDLTAMEKPNNKHAADSFSSEDLVSPVKKAKKSEEVSGGGEAVAAVGNREAEEDKPSFVSEEKKEFLVEADVAEDKGARHTMEDVWVVLPDASLDFPGTLRCAHFAIYDGHGGRLAAEFAKKHLHLNVLSAGLPRELLDVKVAKKAILEGFRKTDELLLQKSVSGGWQDGATAVCVWILDQKVFVANIGDAKAVLARSSTTNELGNHTEAGNPLKAIVLTREHKAIYPQERSRIQKSGGVISSNGRLQGRLEVSRAFGDRHFKKFGVSATPDIHAFELTERENFMILGCDGLWEVFGPSDAVGFVQKLLKEGLHVSTVSRRLVKEAVKERRCKDNCTAIVIVFKRV.

Positions 1 to 63 (MLEKESDLTA…REAEEDKPSF (63 aa)) are disordered. Over residues 54 to 63 (REAEEDKPSF) the composition is skewed to basic and acidic residues. One can recognise a PPM-type phosphatase domain in the interval 74–348 (EADVAEDKGA…DNCTAIVIVF (275 aa)). Residues D114, G115, D295, and D339 each contribute to the Mn(2+) site.

This sequence belongs to the PP2C family. The cofactor is Mg(2+). It depends on Mn(2+) as a cofactor.

It catalyses the reaction O-phospho-L-seryl-[protein] + H2O = L-seryl-[protein] + phosphate. The enzyme catalyses O-phospho-L-threonyl-[protein] + H2O = L-threonyl-[protein] + phosphate. This is Probable protein phosphatase 2C 8 from Arabidopsis thaliana (Mouse-ear cress).